The chain runs to 119 residues: MSLEQLAGRLISGDIGATAVIKMTGEIIYQSPNWSVDGVHAINVYKNREPSIIIQGVKYSVIDVNEDRLIATNVGGQGHIVGAVAGGKALLIGYVSPNGDARTAYIQIDKTARQLSKIL.

Belongs to the Asgard profilin family.

Its subcellular location is the cytoplasm. It localises to the cytoskeleton. Inhibition of rabbit actin polymerization is reduced by phosphatidylinositol-(4,5)-P2(1,2-dipalmitoyl), a soluble form of the phospholipid phosphatidylinositol, suggesting an unknown lipid might regulate actin-profilin interaction in vivo. Functionally, binds to actin and affects the structure of the cytoskeleton. At high concentrations inhibits spontaneous rabbit actin nucleation. This strongly suggests this archaea has a profilin-regulated actin system, and actin-type genes can be identified in this organism. The protein is Odin profilin of Odinarchaeota yellowstonii (strain LCB_4).